The primary structure comprises 216 residues: Probable GTP-binding protein EngB (216 aa).

The region spanning glutamate 27–glutamate 201 is the EngB-type G domain. Residues glycine 35 to serine 42, glycine 62 to leucine 66, aspartate 80 to glycine 83, threonine 147 to aspartate 150, and phenylalanine 180 to serine 182 contribute to the GTP site. Residues serine 42 and threonine 64 each contribute to the Mg(2+) site.

The protein belongs to the TRAFAC class TrmE-Era-EngA-EngB-Septin-like GTPase superfamily. EngB GTPase family. The cofactor is Mg(2+).

Functionally, necessary for normal cell division and for the maintenance of normal septation. This Yersinia pestis bv. Antiqua (strain Angola) protein is Probable GTP-binding protein EngB.